Reading from the N-terminus, the 218-residue chain is Small ribosomal subunit protein uS3c (218 aa).

The KH type-2 domain maps to 47-118 (VQKNMRIFSG…KLNIAITRIG (72 aa)).

Belongs to the universal ribosomal protein uS3 family. As to quaternary structure, part of the 30S ribosomal subunit.

Its subcellular location is the plastid. The protein resides in the chloroplast. In Cucumis sativus (Cucumber), this protein is Small ribosomal subunit protein uS3c (rps3).